A 204-amino-acid chain; its full sequence is Terpene cyclase ausL (204 aa).

5 helical membrane-spanning segments follow: residues 19 to 39 (LSEM…LAMV), 49 to 69 (AIAV…AWIY), 75 to 95 (HWQG…AATL), 114 to 134 (LVLL…CLAL), and 138 to 158 (GALG…SAAV).

The protein belongs to the paxB family.

It is found in the membrane. The protein operates within secondary metabolite biosynthesis; terpenoid biosynthesis. In terms of biological role, terpene cyclase; part of the gene cluster B that mediates the biosynthesis of austinol and dehydroaustinol, two fungal meroterpenoids. The first step of the pathway is the synthesis of 3,5-dimethylorsellinic acid by the polyketide synthase ausA. 3,5-dimethylorsellinic acid is then prenylated by the polyprenyl transferase ausN. Further epoxidation by the FAD-dependent monooxygenase ausM and cyclization by the probable terpene cyclase ausL lead to the formation of protoaustinoid A. Protoaustinoid A is then oxidized to spiro-lactone preaustinoid A3 by the combined action of the FAD-binding monooxygenases ausB and ausC, and the dioxygenase ausE. Acid-catalyzed keto-rearrangement and ring contraction of the tetraketide portion of preaustinoid A3 by ausJ lead to the formation of preaustinoid A4. The aldo-keto reductase ausK, with the help of ausH, is involved in the next step by transforming preaustinoid A4 into isoaustinone which is in turn hydroxylated by the P450 monooxygenase ausI to form austinolide. Finally, the cytochrome P450 monooxygenase ausG modifies austinolide to austinol. Austinol can be further modified to dehydroaustinol which forms a diffusible complex with diorcinol that initiates conidiation. Due to genetic rearrangements of the clusters and the subsequent loss of some enzymes, the end products of the Emericella nidulans austinoid biosynthesis clusters are austinol and dehydroaustinol, even if additional enzymes, such as the O-acetyltransferase ausQ and the cytochrome P450 monooxygenase ausR are still functional. This chain is Terpene cyclase ausL, found in Emericella nidulans (strain FGSC A4 / ATCC 38163 / CBS 112.46 / NRRL 194 / M139) (Aspergillus nidulans).